The chain runs to 421 residues: Acyl-coenzyme A thioesterase 6 (421 aa).

Active-site charge relay system residues include serine 232, aspartate 326, and histidine 360. Residues 419-421 (SKI) carry the Peroxisome targeting signal motif.

It belongs to the C/M/P thioester hydrolase family.

It localises to the peroxisome. The protein localises to the cytoplasm. The enzyme catalyses pristanoyl-CoA + H2O = 2,6,10,14-tetramethylpentadecanoate + CoA + H(+). It carries out the reaction phytanoyl-CoA + H2O = 3,7,11,15-tetramethylhexadecanoate + CoA + H(+). It functions in the pathway lipid metabolism; fatty acid metabolism. Catalyzes the hydrolysis of acyl-CoAs into free fatty acids and coenzyme A (CoASH), regulating their respective intracellular levels. Catalyzes the hydrolysis of phytanoyl-CoA and pristanoyl-CoA, two methyl-branched fatty acids derived from phytol, that enter the body via the diet. This Homo sapiens (Human) protein is Acyl-coenzyme A thioesterase 6.